The chain runs to 268 residues: Small ribosomal subunit protein eS1 (268 aa).

It belongs to the eukaryotic ribosomal protein eS1 family. In terms of assembly, component of the small ribosomal subunit. Mature ribosomes consist of a small (40S) and a large (60S) subunit. The 40S subunit contains about 33 different proteins and 1 molecule of RNA (18S). The 60S subunit contains about 49 different proteins and 3 molecules of RNA (28S, 5.8S and 5S).

It localises to the cytoplasm. This chain is Small ribosomal subunit protein eS1, found in Artemia franciscana (Brine shrimp).